Consider the following 138-residue polypeptide: Cystatin-11 (138 aa).

The first 26 residues, 1 to 26 (MMAEPWQALQLLLAILLTLMALPYQA), serve as a signal peptide directing secretion. Intrachain disulfides connect Cys-94–Cys-102 and Cys-115–Cys-135. Residue Asn-132 is glycosylated (N-linked (GlcNAc...) asparagine).

This sequence belongs to the cystatin family. Detected in the epithelium and lumen of the epididymis, and in sperm (at protein level).

Its subcellular location is the secreted. Has antibacterial activity against the Gram-negative bacteria E.coli. May play a role in sperm maturation and fertilization. This is Cystatin-11 (CST11) from Homo sapiens (Human).